The sequence spans 196 residues: CAG pathogenicity island protein 13 (196 aa).

The polypeptide is CAG pathogenicity island protein 13 (cagS) (Helicobacter pylori (strain ATCC 700392 / 26695) (Campylobacter pylori)).